Here is a 365-residue protein sequence, read N- to C-terminus: MKKTALSAWHEAAGAKMIDFGGFLMPVQYTGIIAEHKAVREAAGLFDVSHMGNFYVRGARALEFLQYMTTNDLAKIVDGQAQYTLMLYPDGGIVDDLIIYRVSADTFFLIVNASNCEKDFDWLSSHIGQFEGVALENHTSELSLIALQGPKSFDILARVFPGAGIDKLGSFHFIKLPFEGAEIMVARTGYTGEAGVEICLPNERAVALWSALMEAGKSDGIQPIGLGARDTLRLEMGYSLYGHEIERDVNPLEARLKWVVKLNKPNFIGKQACEQVEINPRKSVVGFSLEGRAIPRQHFKVYNSDKQEIGEVCSGTVSPTLQEPIGTASLLLDYAQPGTPIFVEIRGTMQPGAVRRLPFVHADRP.

The protein belongs to the GcvT family. In terms of assembly, the glycine cleavage system is composed of four proteins: P, T, L and H.

It carries out the reaction N(6)-[(R)-S(8)-aminomethyldihydrolipoyl]-L-lysyl-[protein] + (6S)-5,6,7,8-tetrahydrofolate = N(6)-[(R)-dihydrolipoyl]-L-lysyl-[protein] + (6R)-5,10-methylene-5,6,7,8-tetrahydrofolate + NH4(+). Its function is as follows. The glycine cleavage system catalyzes the degradation of glycine. The protein is Aminomethyltransferase of Chlorobaculum tepidum (strain ATCC 49652 / DSM 12025 / NBRC 103806 / TLS) (Chlorobium tepidum).